A 321-amino-acid polypeptide reads, in one-letter code: Probable pectate lyase A (321 aa).

The first 18 residues, 1–18 (MKFVATLIACGLSGLALA), serve as a signal peptide directing secretion. A glycan (N-linked (GlcNAc...) asparagine) is linked at Asn93. Residues Asp134, Asp163, and Asp167 each coordinate Ca(2+). Arg220 is a catalytic residue. Residue Asn238 is glycosylated (N-linked (GlcNAc...) asparagine).

Belongs to the polysaccharide lyase 1 family. It depends on Ca(2+) as a cofactor.

It is found in the secreted. The catalysed reaction is Eliminative cleavage of (1-&gt;4)-alpha-D-galacturonan to give oligosaccharides with 4-deoxy-alpha-D-galact-4-enuronosyl groups at their non-reducing ends.. Functionally, pectinolytic enzyme consist of four classes of enzymes: pectin lyase, polygalacturonase, pectin methylesterase and rhamnogalacturonase. Among pectinolytic enzymes, pectin lyase is the most important in depolymerization of pectin, since it cleaves internal glycosidic bonds of highly methylated pectins. Favors pectate, the anion, over pectin, the methyl ester. In Aspergillus fumigatus (strain ATCC MYA-4609 / CBS 101355 / FGSC A1100 / Af293) (Neosartorya fumigata), this protein is Probable pectate lyase A (plyA).